Reading from the N-terminus, the 1357-residue chain is DNA-directed RNA polymerase subunit beta (1357 aa).

It belongs to the RNA polymerase beta chain family. The RNAP catalytic core consists of 2 alpha, 1 beta, 1 beta' and 1 omega subunit. When a sigma factor is associated with the core the holoenzyme is formed, which can initiate transcription.

It carries out the reaction RNA(n) + a ribonucleoside 5'-triphosphate = RNA(n+1) + diphosphate. Its function is as follows. DNA-dependent RNA polymerase catalyzes the transcription of DNA into RNA using the four ribonucleoside triphosphates as substrates. The sequence is that of DNA-directed RNA polymerase subunit beta from Pseudomonas paraeruginosa (strain DSM 24068 / PA7) (Pseudomonas aeruginosa (strain PA7)).